An 88-amino-acid polypeptide reads, in one-letter code: Small ribosomal subunit protein bS20 (88 aa).

The interval Met1–His20 is disordered.

It belongs to the bacterial ribosomal protein bS20 family.

Its function is as follows. Binds directly to 16S ribosomal RNA. This Ralstonia nicotianae (strain ATCC BAA-1114 / GMI1000) (Ralstonia solanacearum) protein is Small ribosomal subunit protein bS20.